We begin with the raw amino-acid sequence, 394 residues long: Na(+)/H(+) antiporter NhaA (394 aa).

11 consecutive transmembrane segments (helical) span residues 14–34 (AGGLILIIAAAIALLMANSAL), 59–79 (LLLWINDGLMAVFFLVVGLEV), 95–115 (VFPAIAALGGMLAPALIYLLF), 125–145 (GWAIPAATDIAFALGVMALLG), 154–174 (VFLLALAIIDDLGVIIIIALF), 179–199 (VSLQSLGIAAAAIALLAYMNW), 213–233 (LVLWVCILKSGVHATLAGVIV), 254–274 (GLHPWVAYLILPLFAFANAGV), 292–312 (IATGLFIGKPLGIFTFSWLAV), 328–348 (IFAVSVLCGIGFTMSIFIASL), and 363–383 (LGILLGSTTAAVVGYSLLRLV).

Belongs to the NhaA Na(+)/H(+) (TC 2.A.33) antiporter family.

Its subcellular location is the cell inner membrane. It carries out the reaction Na(+)(in) + 2 H(+)(out) = Na(+)(out) + 2 H(+)(in). Na(+)/H(+) antiporter that extrudes sodium in exchange for external protons. The polypeptide is Na(+)/H(+) antiporter NhaA (Yersinia pseudotuberculosis serotype O:1b (strain IP 31758)).